The sequence spans 631 residues: Phosphomethylpyrimidine synthase (631 aa).

Residues asparagine 239, methionine 268, tyrosine 297, histidine 333, 353 to 355 (SRG), 394 to 397 (DGLR), and glutamate 433 each bind substrate. Residue histidine 437 participates in Zn(2+) binding. Tyrosine 460 is a substrate binding site. Residue histidine 501 participates in Zn(2+) binding. Positions 581, 584, and 589 each coordinate [4Fe-4S] cluster.

Belongs to the ThiC family. As to quaternary structure, homodimer. [4Fe-4S] cluster is required as a cofactor.

It carries out the reaction 5-amino-1-(5-phospho-beta-D-ribosyl)imidazole + S-adenosyl-L-methionine = 4-amino-2-methyl-5-(phosphooxymethyl)pyrimidine + CO + 5'-deoxyadenosine + formate + L-methionine + 3 H(+). Its pathway is cofactor biosynthesis; thiamine diphosphate biosynthesis. Functionally, catalyzes the synthesis of the hydroxymethylpyrimidine phosphate (HMP-P) moiety of thiamine from aminoimidazole ribotide (AIR) in a radical S-adenosyl-L-methionine (SAM)-dependent reaction. This chain is Phosphomethylpyrimidine synthase, found in Escherichia coli O157:H7.